The following is a 91-amino-acid chain: Probable Fe(2+)-trafficking protein (91 aa).

The protein belongs to the Fe(2+)-trafficking protein family. In terms of assembly, monomer.

Could be a mediator in iron transactions between iron acquisition and iron-requiring processes, such as synthesis and/or repair of Fe-S clusters in biosynthetic enzymes. The protein is Probable Fe(2+)-trafficking protein of Escherichia coli O7:K1 (strain IAI39 / ExPEC).